We begin with the raw amino-acid sequence, 150 residues long: Large ribosomal subunit protein bL9 (150 aa).

It belongs to the bacterial ribosomal protein bL9 family.

In terms of biological role, binds to the 23S rRNA. This chain is Large ribosomal subunit protein bL9, found in Streptococcus agalactiae serotype Ia (strain ATCC 27591 / A909 / CDC SS700).